The chain runs to 946 residues: Bifunctional glutamine synthetase adenylyltransferase/adenylyl-removing enzyme (946 aa).

Residues 1–440 (MKPLSSPLQQ…VFNELIGDDE (440 aa)) are adenylyl removase. The tract at residues 449-946 (SEQWRELWQD…ASWQKWLVEE (498 aa)) is adenylyl transferase.

This sequence belongs to the GlnE family. Mg(2+) serves as cofactor.

It carries out the reaction [glutamine synthetase]-O(4)-(5'-adenylyl)-L-tyrosine + phosphate = [glutamine synthetase]-L-tyrosine + ADP. The catalysed reaction is [glutamine synthetase]-L-tyrosine + ATP = [glutamine synthetase]-O(4)-(5'-adenylyl)-L-tyrosine + diphosphate. Functionally, involved in the regulation of glutamine synthetase GlnA, a key enzyme in the process to assimilate ammonia. When cellular nitrogen levels are high, the C-terminal adenylyl transferase (AT) inactivates GlnA by covalent transfer of an adenylyl group from ATP to specific tyrosine residue of GlnA, thus reducing its activity. Conversely, when nitrogen levels are low, the N-terminal adenylyl removase (AR) activates GlnA by removing the adenylyl group by phosphorolysis, increasing its activity. The regulatory region of GlnE binds the signal transduction protein PII (GlnB) which indicates the nitrogen status of the cell. The polypeptide is Bifunctional glutamine synthetase adenylyltransferase/adenylyl-removing enzyme (Shigella dysenteriae serotype 1 (strain Sd197)).